A 591-amino-acid chain; its full sequence is Metalloendopeptidase OPG085 (591 aa).

His41 is a Zn(2+) binding site. Residue Glu44 is part of the active site. Residues His45 and Glu112 each coordinate Zn(2+).

The protein belongs to the peptidase M44 family. The cofactor is Zn(2+). In terms of processing, undergoes proteolytic processing during the course of infection. May be cleaved into 46 kDa and 22 kDa products (Potential).

The protein localises to the virion. In terms of biological role, probably involved in maturation of some viral proteins by processing them preferentially at Ala-Gly-|-Ser/Thr/Lys motifs. Does not seem to be responsible for the cleavage of major core proteins. This chain is Metalloendopeptidase OPG085 (OPG085), found in Homo sapiens (Human).